Consider the following 352-residue polypeptide: 4-hydroxy-3-methylbut-2-enyl diphosphate reductase (352 aa).

Position 36 (cysteine 36) interacts with [4Fe-4S] cluster. Residues histidine 76 and histidine 114 each coordinate (2E)-4-hydroxy-3-methylbut-2-enyl diphosphate. The dimethylallyl diphosphate site is built by histidine 76 and histidine 114. Residues histidine 76 and histidine 114 each contribute to the isopentenyl diphosphate site. Cysteine 136 is a binding site for [4Fe-4S] cluster. Histidine 164 contributes to the (2E)-4-hydroxy-3-methylbut-2-enyl diphosphate binding site. Histidine 164 provides a ligand contact to dimethylallyl diphosphate. Histidine 164 contacts isopentenyl diphosphate. The active-site Proton donor is glutamate 166. A (2E)-4-hydroxy-3-methylbut-2-enyl diphosphate-binding site is contributed by threonine 204. Cysteine 234 contacts [4Fe-4S] cluster. The (2E)-4-hydroxy-3-methylbut-2-enyl diphosphate site is built by serine 262, serine 263, asparagine 264, and serine 309. Serine 262, serine 263, asparagine 264, and serine 309 together coordinate dimethylallyl diphosphate. 4 residues coordinate isopentenyl diphosphate: serine 262, serine 263, asparagine 264, and serine 309.

It belongs to the IspH family. Requires [4Fe-4S] cluster as cofactor.

It carries out the reaction isopentenyl diphosphate + 2 oxidized [2Fe-2S]-[ferredoxin] + H2O = (2E)-4-hydroxy-3-methylbut-2-enyl diphosphate + 2 reduced [2Fe-2S]-[ferredoxin] + 2 H(+). The enzyme catalyses dimethylallyl diphosphate + 2 oxidized [2Fe-2S]-[ferredoxin] + H2O = (2E)-4-hydroxy-3-methylbut-2-enyl diphosphate + 2 reduced [2Fe-2S]-[ferredoxin] + 2 H(+). Its pathway is isoprenoid biosynthesis; dimethylallyl diphosphate biosynthesis; dimethylallyl diphosphate from (2E)-4-hydroxy-3-methylbutenyl diphosphate: step 1/1. The protein operates within isoprenoid biosynthesis; isopentenyl diphosphate biosynthesis via DXP pathway; isopentenyl diphosphate from 1-deoxy-D-xylulose 5-phosphate: step 6/6. In terms of biological role, catalyzes the conversion of 1-hydroxy-2-methyl-2-(E)-butenyl 4-diphosphate (HMBPP) into a mixture of isopentenyl diphosphate (IPP) and dimethylallyl diphosphate (DMAPP). Acts in the terminal step of the DOXP/MEP pathway for isoprenoid precursor biosynthesis. This Bifidobacterium longum (strain NCC 2705) protein is 4-hydroxy-3-methylbut-2-enyl diphosphate reductase.